The primary structure comprises 177 residues: Small ribosomal subunit protein bS21m (177 aa).

The transit peptide at 1–17 (MLKSTLRLSRISLRRGF) directs the protein to the mitochondrion.

The protein belongs to the bacterial ribosomal protein bS21 family. As to quaternary structure, component of the mitochondrial small ribosomal subunit (mt-SSU). Mature yeast 74S mitochondrial ribosomes consist of a small (37S) and a large (54S) subunit. The 37S small subunit contains a 15S ribosomal RNA (15S mt-rRNA) and 34 different proteins. The 54S large subunit contains a 21S rRNA (21S mt-rRNA) and 46 different proteins.

The protein localises to the mitochondrion. In terms of biological role, component of the mitochondrial ribosome (mitoribosome), a dedicated translation machinery responsible for the synthesis of mitochondrial genome-encoded proteins, including at least some of the essential transmembrane subunits of the mitochondrial respiratory chain. The mitoribosomes are attached to the mitochondrial inner membrane and translation products are cotranslationally integrated into the membrane. The chain is Small ribosomal subunit protein bS21m (MRP21) from Saccharomyces cerevisiae (strain ATCC 204508 / S288c) (Baker's yeast).